The primary structure comprises 382 residues: L-lysine 4-hydroxylase (382 aa).

Residues His182, Glu184, and His318 each contribute to the Fe cation site.

The protein belongs to the clavaminate synthase family. The cofactor is Fe(2+).

It catalyses the reaction L-lysine + 2-oxoglutarate + O2 = (4R)-4-hydroxy-L-lysine + succinate + CO2. Its function is as follows. Alpha-ketoglutarate-dependent dioxygenase that in vitro catalyzes the regio- and stereoselective hydroxylation of L-lysine, leading to (4R)-4-hydroxy-L-lysine. Cannot use D-lysine or L-ornithine as substrate. This is L-lysine 4-hydroxylase from Chitinophaga pinensis (strain ATCC 43595 / DSM 2588 / LMG 13176 / NBRC 15968 / NCIMB 11800 / UQM 2034).